Reading from the N-terminus, the 401-residue chain is Enoyl-[acyl-carrier-protein] reductase [NADH] (401 aa).

Residues 48–53 (GASSGY), 74–75 (FE), 111–112 (DA), and 140–141 (LA) contribute to the NAD(+) site. Y226 serves as a coordination point for substrate. Y236 functions as the Proton donor in the catalytic mechanism. NAD(+)-binding positions include K245 and 274 to 276 (VVT).

The protein belongs to the TER reductase family. As to quaternary structure, monomer.

It carries out the reaction a 2,3-saturated acyl-[ACP] + NAD(+) = a (2E)-enoyl-[ACP] + NADH + H(+). It participates in lipid metabolism; fatty acid biosynthesis. Functionally, involved in the final reduction of the elongation cycle of fatty acid synthesis (FAS II). Catalyzes the reduction of a carbon-carbon double bond in an enoyl moiety that is covalently linked to an acyl carrier protein (ACP). The sequence is that of Enoyl-[acyl-carrier-protein] reductase [NADH] from Xylella fastidiosa (strain 9a5c).